The sequence spans 395 residues: S-adenosylmethionine synthase (395 aa).

His-12 is a binding site for ATP. A Mg(2+)-binding site is contributed by Asp-14. A K(+)-binding site is contributed by Glu-40. The L-methionine site is built by Glu-53 and Gln-96. The interval 96 to 106 (QSKEIADAVNF) is flexible loop. Residues 174–176 (DGK), 242–243 (RF), Asp-251, 257–258 (RK), Ala-274, and Lys-278 each bind ATP. Position 251 (Asp-251) interacts with L-methionine. Residue Lys-282 participates in L-methionine binding.

This sequence belongs to the AdoMet synthase family. Homotetramer; dimer of dimers. It depends on Mg(2+) as a cofactor. K(+) serves as cofactor.

It is found in the cytoplasm. The enzyme catalyses L-methionine + ATP + H2O = S-adenosyl-L-methionine + phosphate + diphosphate. The protein operates within amino-acid biosynthesis; S-adenosyl-L-methionine biosynthesis; S-adenosyl-L-methionine from L-methionine: step 1/1. Its function is as follows. Catalyzes the formation of S-adenosylmethionine (AdoMet) from methionine and ATP. The overall synthetic reaction is composed of two sequential steps, AdoMet formation and the subsequent tripolyphosphate hydrolysis which occurs prior to release of AdoMet from the enzyme. The polypeptide is S-adenosylmethionine synthase (Tropheryma whipplei (strain Twist) (Whipple's bacillus)).